The chain runs to 270 residues: Formamidopyrimidine-DNA glycosylase (270 aa).

Pro2 (schiff-base intermediate with DNA) is an active-site residue. The active-site Proton donor is the Glu3. The active-site Proton donor; for beta-elimination activity is the Lys58. Residues His91, Arg109, and Arg151 each coordinate DNA. The segment at 236–270 (LVYGRGGEACKTCQKPLKEIRMNDRTTVYCVTCQQ) adopts an FPG-type zinc-finger fold. The active-site Proton donor; for delta-elimination activity is Arg260.

The protein belongs to the FPG family. As to quaternary structure, monomer. It depends on Zn(2+) as a cofactor.

The enzyme catalyses Hydrolysis of DNA containing ring-opened 7-methylguanine residues, releasing 2,6-diamino-4-hydroxy-5-(N-methyl)formamidopyrimidine.. The catalysed reaction is 2'-deoxyribonucleotide-(2'-deoxyribose 5'-phosphate)-2'-deoxyribonucleotide-DNA = a 3'-end 2'-deoxyribonucleotide-(2,3-dehydro-2,3-deoxyribose 5'-phosphate)-DNA + a 5'-end 5'-phospho-2'-deoxyribonucleoside-DNA + H(+). Its function is as follows. Involved in base excision repair of DNA damaged by oxidation or by mutagenic agents. Acts as a DNA glycosylase that recognizes and removes damaged bases. Has a preference for oxidized purines, such as 7,8-dihydro-8-oxoguanine (8-oxoG). Has AP (apurinic/apyrimidinic) lyase activity and introduces nicks in the DNA strand. Cleaves the DNA backbone by beta-delta elimination to generate a single-strand break at the site of the removed base with both 3'- and 5'-phosphates. This Cellvibrio japonicus (strain Ueda107) (Pseudomonas fluorescens subsp. cellulosa) protein is Formamidopyrimidine-DNA glycosylase.